A 63-amino-acid chain; its full sequence is Kurtoxin-like II (63 aa).

The LCN-type CS-alpha/beta domain maps to 2-62; the sequence is IDGYPVDYWN…ARIKRSGRCR (61 aa). Cystine bridges form between C12/C61, C16/C37, C23/C44, and C27/C46.

This sequence belongs to the long (4 C-C) scorpion toxin superfamily. Sodium channel inhibitor family. Alpha subfamily. In terms of tissue distribution, expressed by the venom gland.

The protein localises to the secreted. This neurotoxin acts on sodium and calcium channels. Potently inhibits native voltage-gated T-type calcium channel activity in mouse male germ cells. Also binds Cav3.1/CACNA1G, Cav3.2/CACNA1H, and Cav3.3/CACNA1I T-type calcium channels and inhibits the channels by modifying voltage-dependent gating. In addition, binds and significantly inhibits the inactivation of activated sodium channels (Nav1.2/SCN2A and Nav1.5/SCN5A). This is Kurtoxin-like II from Parabuthus granulatus (Granulated thick-tailed scorpion).